We begin with the raw amino-acid sequence, 118 residues long: Large ribosomal subunit protein bL20 (118 aa).

This sequence belongs to the bacterial ribosomal protein bL20 family.

In terms of biological role, binds directly to 23S ribosomal RNA and is necessary for the in vitro assembly process of the 50S ribosomal subunit. It is not involved in the protein synthesizing functions of that subunit. This is Large ribosomal subunit protein bL20 from Sodalis glossinidius (strain morsitans).